The following is a 324-amino-acid chain: 2-dehydro-3-deoxygluconokinase (324 aa).

Residues 35-39 (GAESN), 106-108 (YYR), and Arg170 contribute to the substrate site. ATP contacts are provided by residues 168-170 (NVR), 228-233 (KLGKEG), and 258-261 (GAGD). 2 residues coordinate substrate: Asp261 and Asp297. Asp261 acts as the Proton acceptor in catalysis.

It belongs to the carbohydrate kinase PfkB family.

The enzyme catalyses 2-dehydro-3-deoxy-D-gluconate + ATP = 2-dehydro-3-deoxy-6-phospho-D-gluconate + ADP + H(+). It functions in the pathway carbohydrate acid metabolism; 2-dehydro-3-deoxy-D-gluconate degradation; D-glyceraldehyde 3-phosphate and pyruvate from 2-dehydro-3-deoxy-D-gluconate: step 1/2. Catalyzes the phosphorylation of 2-keto-3-deoxygluconate (KDG) to produce 2-keto-3-deoxy-6-phosphogluconate (KDPG). In Bacillus subtilis (strain 168), this protein is 2-dehydro-3-deoxygluconokinase (kdgK).